Reading from the N-terminus, the 303-residue chain is Ribonucleoside-diphosphate reductase small subunit (303 aa).

Residues aspartate 60, glutamate 90, and histidine 93 each contribute to the Fe cation site. Residue tyrosine 97 is part of the active site. The helical transmembrane segment at 147–167 (LLMILIEGIFFASSFASISYL) threads the bilayer. Residues glutamate 153, glutamate 187, and histidine 190 each contribute to the Fe cation site.

This sequence belongs to the ribonucleoside diphosphate reductase small chain family. In terms of assembly, heterotetramer composed of a homodimer of the large subunit (R1) and a homodimer of the small subunit (R2). Larger multisubunit protein complex are also active, composed of (R1)n(R2)n. The cofactor is Fe cation.

It localises to the host membrane. It catalyses the reaction a 2'-deoxyribonucleoside 5'-diphosphate + [thioredoxin]-disulfide + H2O = a ribonucleoside 5'-diphosphate + [thioredoxin]-dithiol. In terms of biological role, ribonucleoside-diphosphate reductase holoenzyme provides the precursors necessary for viral DNA synthesis. Allows virus growth in non-dividing cells, as well as reactivation from latency in infected hosts. Catalyzes the biosynthesis of deoxyribonucleotides from the corresponding ribonucleotides. In Suid herpesvirus 1 (strain Kaplan) (SuHV-1), this protein is Ribonucleoside-diphosphate reductase small subunit.